Reading from the N-terminus, the 569-residue chain is Putative potassium-transporting ATPase ATP-binding subunit (569 aa).

The next 2 membrane-spanning stretches (helical) occupy residues 34 to 54 and 58 to 78; these read PVMF…LAMV and IAGS…TVLF. The 4-aspartylphosphate intermediate role is filled by aspartate 194. ATP is bound by residues aspartate 231, glutamate 235, 264 to 271, and lysine 282; that span reads FTAQSRMS. Positions 405 and 409 each coordinate Mg(2+). 3 consecutive transmembrane segments (helical) span residues 475 to 495, 503 to 523, and 543 to 563; these read FAII…LNVM, AILS…PLAL, and IYGL…DVLL.

This sequence belongs to the cation transport ATPase (P-type) (TC 3.A.3) family. Type IA subfamily. In terms of assembly, the system is composed of three essential subunits: KdpA, KdpB and KdpC.

It localises to the cell inner membrane. It carries out the reaction K(+)(out) + ATP + H2O = K(+)(in) + ADP + phosphate + H(+). Its function is as follows. Part of the high-affinity ATP-driven potassium transport (or Kdp) system, which catalyzes the hydrolysis of ATP coupled with the electrogenic transport of potassium into the cytoplasm. This subunit is responsible for energy coupling to the transport system and for the release of the potassium ions to the cytoplasm. In Salmonella typhi, this protein is Putative potassium-transporting ATPase ATP-binding subunit.